The chain runs to 236 residues: Large ribosomal subunit protein uL1 (236 aa).

Belongs to the universal ribosomal protein uL1 family. In terms of assembly, part of the 50S ribosomal subunit.

In terms of biological role, binds directly to 23S rRNA. The L1 stalk is quite mobile in the ribosome, and is involved in E site tRNA release. Functionally, protein L1 is also a translational repressor protein, it controls the translation of the L11 operon by binding to its mRNA. The polypeptide is Large ribosomal subunit protein uL1 (Heliobacterium modesticaldum (strain ATCC 51547 / Ice1)).